Here is a 205-residue protein sequence, read N- to C-terminus: 2-dehydro-3-deoxy-6-phosphogalactonate aldolase (205 aa).

Residue Arg-14 participates in 2-dehydro-3-deoxy-6-phospho-D-galactonate binding. Residue Glu-37 is the Proton donor/acceptor of the active site. 2-dehydro-3-deoxy-6-phospho-D-galactonate-binding residues include Thr-66, Lys-126, Gly-156, Gly-176, and Ser-177. The active-site Schiff-base intermediate with substrate is Lys-126.

Belongs to the KHG/KDPG aldolase family. Homotrimer.

The catalysed reaction is 2-dehydro-3-deoxy-6-phospho-D-galactonate = D-glyceraldehyde 3-phosphate + pyruvate. The protein operates within carbohydrate acid metabolism; D-galactonate degradation; D-glyceraldehyde 3-phosphate and pyruvate from D-galactonate: step 3/3. Involved in the degradation of galactose via the DeLey-Doudoroff pathway. Catalyzes the reversible, stereospecific retro-aldol cleavage of 2-keto-3-deoxy-6-phosphogalactonate (KDPGal) to pyruvate and D-glyceraldehyde-3-phosphate. In the synthetic direction, it catalyzes the addition of pyruvate to electrophilic aldehydes with re-facial selectivity. It can use a limited number of aldehyde substrates, including D-glyceraldehyde-3-phosphate (natural substrate), D-glyceraldehyde, glycolaldehyde, 2-pyridinecarboxaldehyde, D-ribose, D-erythrose and D-threose. It efficiently catalyzes aldol addition only using pyruvate as the nucleophilic component and accepts both stereochemical configurations at C2 of the electrophile. The chain is 2-dehydro-3-deoxy-6-phosphogalactonate aldolase (dgoA) from Escherichia coli (strain K12).